We begin with the raw amino-acid sequence, 245 residues long: Type II restriction enzyme EcoRV (245 aa).

Mg(2+)-binding residues include Glu45, Asp74, and Asp90. Residues Asp74, Asp90, and Lys92 contribute to the active site.

As to quaternary structure, homodimer. Requires Mg(2+) as cofactor.

It catalyses the reaction Endonucleolytic cleavage of DNA to give specific double-stranded fragments with terminal 5'-phosphates.. A P subtype restriction enzyme that recognizes the double-stranded sequence 5'-GATATC-3' and cleaves after T-3. The protein is Type II restriction enzyme EcoRV (ecoRVR) of Escherichia coli.